We begin with the raw amino-acid sequence, 377 residues long: MSRGIIIIGSGFAARQLVKNIRKQDAHVPLTLIAADSMDEYNKPDLSHVISQSQRADDLTRQLAGEFAEQFNLRLFPHTWVTDIDADAHVVKSQDKQWQYDKLVLTTGATAFVPPIAGRELMLTLNSQQEYRACETPLRDAQRVLIVGGGLIGSELAMDFCRAGKTVTLMDNAASLLASLMPPEVSSRLQHHLTDMGVHLLLKSQLQKLEKTEAGIRATLVSQHSIEVDAVIAATGLRPETALARRAGVAVNRGVCVDSYLQTSHPDIYAIGDCAEINGQVLPFLQPIQLSAMYLAKNLLGGNAPLKLPAMLVKVKTPELPLHLAGETQRRDLSWQITAESDGMIAKGMSGEGQLRAFVVSEDRMKEAFALLKTLSV.

This sequence belongs to the FAD-dependent oxidoreductase family. It depends on FAD as a cofactor.

It is found in the cytoplasm. It carries out the reaction 2 reduced [nitric oxide reductase rubredoxin domain] + NAD(+) + H(+) = 2 oxidized [nitric oxide reductase rubredoxin domain] + NADH. Its pathway is nitrogen metabolism; nitric oxide reduction. Its function is as follows. One of at least two accessory proteins for anaerobic nitric oxide (NO) reductase. Reduces the rubredoxin moiety of NO reductase. The polypeptide is Nitric oxide reductase FlRd-NAD(+) reductase (Salmonella typhi).